Here is a 144-residue protein sequence, read N- to C-terminus: Large ribosomal subunit protein uL16 (144 aa).

The protein belongs to the universal ribosomal protein uL16 family. As to quaternary structure, part of the 50S ribosomal subunit.

Its function is as follows. Binds 23S rRNA and is also seen to make contacts with the A and possibly P site tRNAs. This is Large ribosomal subunit protein uL16 from Clostridium perfringens (strain ATCC 13124 / DSM 756 / JCM 1290 / NCIMB 6125 / NCTC 8237 / Type A).